The chain runs to 335 residues: Erlin-2 (335 aa).

The Cytoplasmic portion of the chain corresponds to 1-2; sequence MS. Residues 3–23 form a helical membrane-spanning segment; that stretch reads HAGAIAAIGVALIAAALFSAI. The Lumenal portion of the chain corresponds to 24–335; sequence HKIEEGHVGV…ALNEPAVGDE (312 aa). Asn106 carries an N-linked (GlcNAc...) asparagine glycan. Positions 310–321 are enriched in polar residues; that stretch reads AGPSVQSATLLQ. The segment at 310 to 335 is disordered; sequence AGPSVQSATLLQDDSPALNEPAVGDE.

The protein belongs to the band 7/mec-2 family.

The protein resides in the endoplasmic reticulum membrane. Mediates the endoplasmic reticulum-associated degradation (ERAD) of inositol 1,4,5-trisphosphate receptors (IP3Rs). Promotes sterol-accelerated ERAD of HMGCR. Involved in regulation of cellular cholesterol homeostasis by regulation the SREBP signaling pathway. The protein is Erlin-2 (erlin2) of Xenopus tropicalis (Western clawed frog).